A 170-amino-acid chain; its full sequence is Ribulose bisphosphate carboxylase small subunit, chloroplastic (170 aa).

2 consecutive transit peptides (chloroplast) follow at residues 1 to 46 (MAPT…GRIR) and 1 to 47 (MAPT…RIRC).

Belongs to the RuBisCO small chain family. As to quaternary structure, heterohexadecamer of 8 large and 8 small subunits.

The protein localises to the plastid. It is found in the chloroplast. In terms of biological role, ruBisCO catalyzes two reactions: the carboxylation of D-ribulose 1,5-bisphosphate, the primary event in carbon dioxide fixation, as well as the oxidative fragmentation of the pentose substrate. Both reactions occur simultaneously and in competition at the same active site. Although the small subunit is not catalytic it is essential for maximal activity. The polypeptide is Ribulose bisphosphate carboxylase small subunit, chloroplastic (Zea mays (Maize)).